The chain runs to 352 residues: Isopentenyl-diphosphate delta-isomerase (352 aa).

6-7 is a substrate binding site; it reads RK. FMN-binding positions include 63-65, Ser93, and Asn122; that span reads AMT. Substrate is bound at residue 93 to 95; the sequence is SQR. Residue Gln160 participates in substrate binding. Residue Glu161 participates in Mg(2+) binding. Residues Lys192, Thr221, 271–273, and 292–293 contribute to the FMN site; these read GIR and SQ.

This sequence belongs to the IPP isomerase type 2 family. Homooctamer. Dimer of tetramers. The cofactor is FMN. NADPH serves as cofactor. It depends on Mg(2+) as a cofactor.

The protein resides in the cytoplasm. The enzyme catalyses isopentenyl diphosphate = dimethylallyl diphosphate. Its function is as follows. Involved in the biosynthesis of isoprenoids. Catalyzes the 1,3-allylic rearrangement of the homoallylic substrate isopentenyl (IPP) to its allylic isomer, dimethylallyl diphosphate (DMAPP). This Pyrobaculum aerophilum (strain ATCC 51768 / DSM 7523 / JCM 9630 / CIP 104966 / NBRC 100827 / IM2) protein is Isopentenyl-diphosphate delta-isomerase.